Here is a 493-residue protein sequence, read N- to C-terminus: ATP synthase subunit beta 3 (493 aa).

A disordered region spans residues 113 to 138 (VPGDNGTPLPPGTPRRPIHRKPPPLA). 170–177 (GGAGVGKT) lines the ATP pocket.

This sequence belongs to the ATPase alpha/beta chains family. F-type ATPases have 2 components, CF(1) - the catalytic core - and CF(0) - the membrane proton channel. CF(1) has five subunits: alpha(3), beta(3), gamma(1), delta(1), epsilon(1). CF(0) has three main subunits: a(1), b(2) and c(9-12). The alpha and beta chains form an alternating ring which encloses part of the gamma chain. CF(1) is attached to CF(0) by a central stalk formed by the gamma and epsilon chains, while a peripheral stalk is formed by the delta and b chains.

It is found in the cell inner membrane. It carries out the reaction ATP + H2O + 4 H(+)(in) = ADP + phosphate + 5 H(+)(out). Functionally, produces ATP from ADP in the presence of a proton gradient across the membrane. The catalytic sites are hosted primarily by the beta subunits. The protein is ATP synthase subunit beta 3 of Paraburkholderia xenovorans (strain LB400).